The primary structure comprises 300 residues: MKQIVIASRESKLALWQTNYVKDRIQQELNIRCQINTMKTQGDIILDKPLNKIGGKALFMKELEIAMLNNKADIAVHSLKDVPYQLPQGFCLSSFMPREDPRDAFVSNKYSSIDDLPRGAIVGTSSLRRKAQLLHYRYDLEIRDLRGNVQTRLSKLDNGDYDAIILASAGLIRLELNERITQFIPVEISLPAVGQGIVVIEALDKSSEILQKLQKLNCSDSFCVATAERAFNQELKGGCHVAIGAYAELHDNQITLTAMVASSDGKNILKRKLTGDDPMRLGKLLAQEMIELGAYKILEK.

The residue at position 239 (C239) is an S-(dipyrrolylmethanemethyl)cysteine.

It belongs to the HMBS family. In terms of assembly, monomer. It depends on dipyrromethane as a cofactor.

It carries out the reaction 4 porphobilinogen + H2O = hydroxymethylbilane + 4 NH4(+). It functions in the pathway porphyrin-containing compound metabolism; protoporphyrin-IX biosynthesis; coproporphyrinogen-III from 5-aminolevulinate: step 2/4. Its function is as follows. Tetrapolymerization of the monopyrrole PBG into the hydroxymethylbilane pre-uroporphyrinogen in several discrete steps. In Francisella philomiragia subsp. philomiragia (strain ATCC 25017 / CCUG 19701 / FSC 153 / O#319-036), this protein is Porphobilinogen deaminase.